The sequence spans 385 residues: tRNA-specific 2-thiouridylase MnmA (385 aa).

Residues 30 to 37 and Met56 each bind ATP; that span reads GMSGGVDS. The interaction with target base in tRNA stretch occupies residues 118-120; the sequence is NPD. Cys123 (nucleophile) is an active-site residue. An intrachain disulfide couples Cys123 to Cys220. Gly148 lines the ATP pocket. The segment at 170–172 is interaction with tRNA; the sequence is KDQ. Residue Cys220 is the Cysteine persulfide intermediate of the active site. Positions 332–333 are interaction with tRNA; it reads RY.

The protein belongs to the MnmA/TRMU family.

It is found in the cytoplasm. It carries out the reaction S-sulfanyl-L-cysteinyl-[protein] + uridine(34) in tRNA + AH2 + ATP = 2-thiouridine(34) in tRNA + L-cysteinyl-[protein] + A + AMP + diphosphate + H(+). Catalyzes the 2-thiolation of uridine at the wobble position (U34) of tRNA, leading to the formation of s(2)U34. The chain is tRNA-specific 2-thiouridylase MnmA from Haemophilus influenzae (strain PittGG).